The following is a 219-amino-acid chain: Large ribosomal subunit protein uL16 (219 aa).

This sequence belongs to the universal ribosomal protein uL16 family. Component of the small ribosomal subunit. Mature ribosomes consist of a small (40S) and a large (60S) subunit. The 40S subunit contains about 33 different proteins and 1 molecule of RNA (18S). The 60S subunit contains about 49 different proteins and 3 molecules of RNA (25S, 5.8S and 5S).

The protein is Large ribosomal subunit protein uL16 (RPL10) of Solanum melongena (Eggplant).